Reading from the N-terminus, the 226-residue chain is UPF0173 metal-dependent hydrolase GTNG_2675 (226 aa).

The protein belongs to the UPF0173 family.

The polypeptide is UPF0173 metal-dependent hydrolase GTNG_2675 (Geobacillus thermodenitrificans (strain NG80-2)).